Here is a 299-residue protein sequence, read N- to C-terminus: ClpXP adapter protein SpxH (299 aa).

It belongs to the SpxH family. As to quaternary structure, interacts with Spx. Interacts with SpxO/YuzO.

The protein resides in the cytoplasm. Irreversible aggregation upon several stress conditions prevents interaction with Spx and therefore leads to Spx stabilization. Inhibited by interaction with SpxO/YuzO. Its function is as follows. Adapter protein required for efficient degradation of Spx by ClpXP under non-stress conditions. Interaction with Spx stabilizes Spx and exposes the C-terminus of Spx for recognition and proteolysis by ClpXP. Is specific for Spx and does not enhance proteolysis by ClpCP protease. Probably binds 2 zinc ions. The sequence is that of ClpXP adapter protein SpxH from Bacillus subtilis (strain 168).